The primary structure comprises 493 residues: FAD-linked oxidoreductase tazL (493 aa).

Positions 1–17 are cleaved as a signal peptide; sequence MRSNTVILAALPLVASA. N-linked (GlcNAc...) asparagine glycosylation is found at Asn-29, Asn-41, Asn-53, Asn-91, Asn-253, Asn-318, and Asn-387. Residues 63 to 235 form the FAD-binding PCMH-type domain; the sequence is WAEPTFAVTI…TSATYEIFDA (173 aa).

This sequence belongs to the oxygen-dependent FAD-linked oxidoreductase family.

It functions in the pathway secondary metabolite biosynthesis. Its function is as follows. FAD-linked oxidoreductase; part of the gene cluster that mediates the biosynthesis of azaterrilone A and other azaphilones, a class of fungal metabolites characterized by a highly oxygenated pyrano-quinone bicyclic core and exhibiting a broad range of bioactivities. The first step of the pathway begins with the non-reducing polyketide synthase tazA that assembles one acetyl-CoA starter unit, five malonyl-CoA units, and catalyzes a series of Claisen condensations, methylation, PT-mediated cyclization, and finally releases the first hexaketide precursor through the R-domain. The tazA product then undergoes reduction on its terminal ketone and the following pyran-ring formation by yet undetermined enzyme(s). Dehydration and enoyl reduction, possibly involving the trans-enoyl reductase tazE leads to the next intermediate. TazD is predicted as an acetyltransferase and might catalyze the acetylation steps leading to the synthesis of azaterrilone A. Azaterrilone A is not the final product of the taz pathway and both the highly reducing polyketide synthase tazB and the dual enzyme tazHJ catalyze late steps of the pathway, leading to the production of the 2 final stereoisomers that contain additional polyketide modification whose structures have still to be determined. This chain is FAD-linked oxidoreductase tazL, found in Aspergillus terreus (strain NIH 2624 / FGSC A1156).